The following is a 66-amino-acid chain: M-poneratoxin-Dq3a (66 aa).

A signal peptide spans 1–23; sequence MKLSALSIIFGMILVMTIMYTKA. Residues 24–43 constitute a propeptide that is removed on maturation; sequence EAEAEAEADADADAKAEAEA.

This sequence belongs to the non-disulfide-bridged peptide (NDBP) superfamily. Medium-length antimicrobial peptide (group 3) family. Ponericin-W subfamily. In terms of tissue distribution, expressed by the venom gland.

It localises to the secreted. It is found in the target cell membrane. In terms of biological role, may have antimicrobial properties by disrupting the integrity of the bacterial cell membrane. In addition, when tested in vitro on the parasite Trypanosoma cruzi (responsible of the Chagas disease), is able to potently reduce the number of the three forms (epimastigote, trypomastigote and amastigote) by inducing cell death through necrosis. Its function is as follows. May have antimicrobial properties by disrupting the integrity of the bacterial cell membrane. In addition, when tested in vitro on the parasite Trypanosoma cruzi (responsible of the Chagas disease), is able to moderately reduce the number of the forms epimastigote and trypomastigote. Its activity on the amastigote form has not been tested. Functionally, may have antimicrobial properties by disrupting the integrity of the bacterial cell membrane. In addition, when tested in vitro on the parasite Trypanosoma cruzi (responsible of the Chagas disease), shows only a weak reduction of the number of the trypomastigote forms. Has no activity on the epimastigote forms. Its activity on the amastigote form has not been tested. This is M-poneratoxin-Dq3a from Dinoponera quadriceps (South American ant).